A 100-amino-acid polypeptide reads, in one-letter code: MDTFEVFKMSVVGSFKARQFLSESEKHKRLKINQNARFRFLRDCHTDSEVGNVCVVNKVGDNYLLSFPVKKNKNEEKVMLSLYPDKFEDPKIGKNVNIKR.

This is an uncharacterized protein from Borreliella burgdorferi (strain ATCC 35210 / DSM 4680 / CIP 102532 / B31) (Borrelia burgdorferi).